The chain runs to 264 residues: Thiazole synthase (264 aa).

The active-site Schiff-base intermediate with DXP is the Lys106. 1-deoxy-D-xylulose 5-phosphate-binding positions include Gly167, 193–194, and 215–216; these read AG and NS.

It belongs to the ThiG family. In terms of assembly, homotetramer. Forms heterodimers with either ThiH or ThiS.

Its subcellular location is the cytoplasm. The catalysed reaction is [ThiS sulfur-carrier protein]-C-terminal-Gly-aminoethanethioate + 2-iminoacetate + 1-deoxy-D-xylulose 5-phosphate = [ThiS sulfur-carrier protein]-C-terminal Gly-Gly + 2-[(2R,5Z)-2-carboxy-4-methylthiazol-5(2H)-ylidene]ethyl phosphate + 2 H2O + H(+). It functions in the pathway cofactor biosynthesis; thiamine diphosphate biosynthesis. In terms of biological role, catalyzes the rearrangement of 1-deoxy-D-xylulose 5-phosphate (DXP) to produce the thiazole phosphate moiety of thiamine. Sulfur is provided by the thiocarboxylate moiety of the carrier protein ThiS. In vitro, sulfur can be provided by H(2)S. In Pseudomonas savastanoi pv. phaseolicola (strain 1448A / Race 6) (Pseudomonas syringae pv. phaseolicola (strain 1448A / Race 6)), this protein is Thiazole synthase.